The following is a 199-amino-acid chain: Puromycin N-acetyltransferase (199 aa).

Positions 6 to 198 constitute an N-acetyltransferase domain; it reads PTVRLATRDD…RTWCMTRKPG (193 aa).

In terms of biological role, detoxification of puromycin. The polypeptide is Puromycin N-acetyltransferase (pac) (Streptomyces alboniger).